We begin with the raw amino-acid sequence, 79 residues long: Crassicorin-I (79 aa).

The N-terminal stretch at 1 to 19 is a signal peptide; it reads MKLFLVSIVLVGMLVLAAA. A propeptide spanning residues 20-39 is cleaved from the precursor; it reads RPERDIDSFDEQEEKGFVKR. 3 cysteine pairs are disulfide-bonded: Cys-43/Cys-76, Cys-45/Cys-69, and Cys-59/Cys-77.

The protein belongs to the sea anemone type 3 (BDS) potassium channel toxin family. In terms of tissue distribution, highly expressed by the mesenteries. Moderately expressed by the pharynx. Weakly expressed by the gonad and pedal disk. No expression in tentacle.

The protein resides in the secreted. It is found in the nematocyst. Functionally, peptide with both antimicrobial and neurotoxin activities. Cationic AMP with antibacterial activity against both Gram-positive bacteria (B.subtilis, MIC=11.49 ug/mL) and Gram-negative bacteria (E.coli (MIC=12.21 ug/mL) and S.enterica (MIC=11.95 ug/mL)). Shows no significant antimicrobial activity against bacteria S.aureus and P.aeruginosa, as well as the fungus C.albicans. In vivo, induces reversible paralytic activity towards the shrimp P.paucidens. May act by impairing sodium or potassium channels in the prey. This chain is Crassicorin-I, found in Urticina crassicornis (Mottled anemone).